A 429-amino-acid chain; its full sequence is Glutamate-1-semialdehyde 2,1-aminomutase 2 (429 aa).

At lysine 268 the chain carries N6-(pyridoxal phosphate)lysine.

Belongs to the class-III pyridoxal-phosphate-dependent aminotransferase family. HemL subfamily. In terms of assembly, homodimer. Pyridoxal 5'-phosphate serves as cofactor.

It is found in the cytoplasm. The enzyme catalyses (S)-4-amino-5-oxopentanoate = 5-aminolevulinate. It participates in porphyrin-containing compound metabolism; protoporphyrin-IX biosynthesis; 5-aminolevulinate from L-glutamyl-tRNA(Glu): step 2/2. In Staphylococcus aureus (strain bovine RF122 / ET3-1), this protein is Glutamate-1-semialdehyde 2,1-aminomutase 2.